Consider the following 208-residue polypeptide: Small ribosomal subunit protein uS4 (208 aa).

In terms of domain architecture, S4 RNA-binding spans 98 to 161; sequence RRLDNVIYRL…RKMPVIAEAQ (64 aa).

The protein belongs to the universal ribosomal protein uS4 family. Part of the 30S ribosomal subunit. Contacts protein S5. The interaction surface between S4 and S5 is involved in control of translational fidelity.

Functionally, one of the primary rRNA binding proteins, it binds directly to 16S rRNA where it nucleates assembly of the body of the 30S subunit. In terms of biological role, with S5 and S12 plays an important role in translational accuracy. The polypeptide is Small ribosomal subunit protein uS4 (Oleidesulfovibrio alaskensis (strain ATCC BAA-1058 / DSM 17464 / G20) (Desulfovibrio alaskensis)).